A 370-amino-acid chain; its full sequence is Chloromuconate cycloisomerase (370 aa).

The active-site Proton acceptor is lysine 165. Positions 194, 220, and 245 each coordinate Mn(2+). Catalysis depends on glutamate 323, which acts as the Proton donor.

The protein belongs to the mandelate racemase/muconate lactonizing enzyme family. Mn(2+) is required as a cofactor.

The enzyme catalyses 2-[(2R)-2-chloro-2,5-dihydro-5-oxofuryl]acetate = 3-chloro-cis,cis-muconate + H(+). It functions in the pathway aromatic compound metabolism; 3-chlorocatechol degradation. The sequence is that of Chloromuconate cycloisomerase (tfdD) from Delftia acidovorans (Pseudomonas acidovorans).